Here is a 98-residue protein sequence, read N- to C-terminus: Aspartyl/glutamyl-tRNA(Asn/Gln) amidotransferase subunit C (98 aa).

Residues 75-98 form a disordered region; the sequence is AQALSGAPAQEQQRFKVPQILGED.

Belongs to the GatC family. As to quaternary structure, heterotrimer of A, B and C subunits.

It catalyses the reaction L-glutamyl-tRNA(Gln) + L-glutamine + ATP + H2O = L-glutaminyl-tRNA(Gln) + L-glutamate + ADP + phosphate + H(+). The catalysed reaction is L-aspartyl-tRNA(Asn) + L-glutamine + ATP + H2O = L-asparaginyl-tRNA(Asn) + L-glutamate + ADP + phosphate + 2 H(+). Allows the formation of correctly charged Asn-tRNA(Asn) or Gln-tRNA(Gln) through the transamidation of misacylated Asp-tRNA(Asn) or Glu-tRNA(Gln) in organisms which lack either or both of asparaginyl-tRNA or glutaminyl-tRNA synthetases. The reaction takes place in the presence of glutamine and ATP through an activated phospho-Asp-tRNA(Asn) or phospho-Glu-tRNA(Gln). This Streptomyces griseus subsp. griseus (strain JCM 4626 / CBS 651.72 / NBRC 13350 / KCC S-0626 / ISP 5235) protein is Aspartyl/glutamyl-tRNA(Asn/Gln) amidotransferase subunit C.